The chain runs to 314 residues: tRNA pseudouridine synthase B (314 aa).

A substrate-binding site is contributed by His43. The active-site Nucleophile is the Asp48. Residues Tyr76, Tyr179, and Leu200 each contribute to the substrate site.

The protein belongs to the pseudouridine synthase TruB family. Type 1 subfamily.

It catalyses the reaction uridine(55) in tRNA = pseudouridine(55) in tRNA. Its function is as follows. Responsible for synthesis of pseudouridine from uracil-55 in the psi GC loop of transfer RNAs. The polypeptide is tRNA pseudouridine synthase B (Escherichia coli O157:H7).